The chain runs to 719 residues: Leucine-rich repeat and fibronectin type-III domain-containing protein 5 (719 aa).

The first 17 residues, 1-17 (MEKILFYLFLIGIAVKA), serve as a signal peptide directing secretion. Residues 18–51 (QICPKRCVCQILSPNLATLCAKKGLLFVPPNIDR) form the LRRNT domain. At 18-529 (QICPKRCVCQ…MQSQFLGGTM (512 aa)) the chain is on the extracellular side. LRR repeat units lie at residues 52–73 (RTVE…DFAN), 76–97 (SLVD…AFAD), 100–121 (NLRA…MFSG), 124–145 (NLHH…AFDD), 148–169 (ALEE…AVEK), 172–193 (SLHT…TFSH), and 196–217 (KMTR…PLFQ). Residue Asn-73 is glycosylated (N-linked (GlcNAc...) asparagine). Residues 240-286 (NPLHCNCELLWLRRLSREDDLETCASPPLLTGRYFWSIPEEEFLCEP) enclose the LRRCT domain. One can recognise an Ig-like domain in the interval 287–373 (PLITRHTHEM…GEATQIVDLH (87 aa)). Cys-308 and Cys-357 are joined by a disulfide. N-linked (GlcNAc...) asparagine glycosylation is found at Asn-330, Asn-339, Asn-382, Asn-406, and Asn-452. The interval 385–414 (NHIHEPDPGSSDISTSTKSGSNTSSSNGDT) is disordered. Low complexity predominate over residues 393 to 414 (GSSDISTSTKSGSNTSSSNGDT). The Fibronectin type-III domain occupies 414-503 (TKLSQDKIVV…ITSLTATRVV (90 aa)). A helical transmembrane segment spans residues 530–550 (IIIIGGIIVASVLVFIIILMI). Topologically, residues 551–719 (RYKVCNNNGQ…VQETQRLELI (169 aa)) are cytoplasmic. Positions 615–627 (ETCSSQDSSTTTS) are enriched in low complexity. Residues 615–694 (ETCSSQDSST…SVTEGPTSKR (80 aa)) form a disordered region. Composition is skewed to polar residues over residues 628 to 641 (ALPP…SVSQ) and 649 to 677 (TKPS…TALQ).

Belongs to the LRFN family. Can form heteromeric complexes with LRFN1, LRFN2, LRFN3 and LFRN4. Able to form homomeric complexes across cell junctions, between adjacent cells. Does not interact with DLG1, DLG2, DLG3 and DLG4.

It is found in the membrane. Its function is as follows. Cell adhesion molecule that mediates homophilic cell-cell adhesion in a Ca(2+)-independent manner. Promotes neurite outgrowth in hippocampal neurons. This chain is Leucine-rich repeat and fibronectin type-III domain-containing protein 5 (LRFN5), found in Homo sapiens (Human).